The primary structure comprises 324 residues: Cuticle collagen lon-3 (324 aa).

Residues 1–30 form the signal peptide; it reads MSVTTATSGALIFSGASLLVSLFAAASIYS. The disordered stretch occupies residues 119–324; sequence VENTCPTGPD…AWRRKHKRVY (206 aa). Triple-helical region stretches follow at residues 129-152, 170-229, and 235-294; these read GEEG…DGQD, GLPG…KGDD, and GRQG…SGLP. Composition is skewed to low complexity over residues 136–151, 168–181, 210–223, 235–246, and 261–273; these read PDGQ…FDGQ, PQGL…QGAP, PTGA…PGAS, GRQGQRGQPGEQ, and EGPP…VGVP. Basic and acidic residues predominate over residues 296 to 311; that stretch reads KDAEYCKCPTRDDGGN. The span at 314-324 shows a compositional bias: basic residues; it reads RAWRRKHKRVY.

It belongs to the cuticular collagen family. Collagen polypeptide chains are complexed within the cuticle by disulfide bonds and other types of covalent cross-links.

Its function is as follows. Nematode cuticles are composed largely of collagen-like proteins. The cuticle functions both as an exoskeleton and as a barrier to protect the worm from its environment. Dose-dependent regulator of body length and shape. The polypeptide is Cuticle collagen lon-3 (lon-3) (Caenorhabditis elegans).